The sequence spans 519 residues: MSENSTFSTEDSCNSSYKPHASNLRRAGKTCSWASYMTNSPTLIVMIGLPARGKTYVSKKLTRYLNWIGVPTKVFNLGVYRREAVKSYQSYDFFRHDNEEAMKIRKQCALVALEDVKAYFTEESGQIAVFDATNTTRERRDMILNFAKQNAFKVFFVESVCDDPDVIAANILEVKVSSPDYPERNRENVMEDFLKRIECYKVTYQPLDPDNYDKDLSFIKVMNVGQRFLVNRVQDYIQSKIVYYLMNIHVHPRTIYLCRHGESEFNLLGKIGGDSGLSVRGKQFAHALKKFLEEQEIQDLKVWTSQLKRTIQTAESLGVTYEQWKILNEIDAGVCEEMTYSEIEQRYPEEFALRDQEKYLYRYPGGESYQDLVQRLEPVIMELERQGNILVISHQAVMRCLLAYFLDKGADELPYLRCPLHIIFKLTPVAYGCKVETITLNVDAVDTHRDKPTHNFPKSQTPVRMRRNSFTPLSSSNTIRRPRNYSVGSRPLKPLSPLRALDMQEGADQPKTQVSIPVV.

Over residues 1–17 (MSENSTFSTEDSCNSSY) the composition is skewed to polar residues. Positions 1–22 (MSENSTFSTEDSCNSSYKPHAS) are disordered. Ser-2 bears the N-acetylserine mark. Positions 2–251 (SENSTFSTED…VYYLMNIHVH (250 aa)) are 6-phosphofructo-2-kinase. Phosphoserine; by PKA is present on Ser-32. 48 to 56 (GLPARGKTY) contributes to the ATP binding site. Positions 81 and 105 each coordinate beta-D-fructose 6-phosphate. Asp-131 is an active-site residue. Beta-D-fructose 6-phosphate contacts are provided by Thr-133 and Arg-139. Cys-161 is a catalytic residue. 170-175 (NILEVK) contacts ATP. Beta-D-fructose 6-phosphate is bound by residues Lys-175, Arg-196, and Tyr-200. The segment at 252-519 (PRTIYLCRHG…PKTQVSIPVV (268 aa)) is fructose-2,6-bisphosphatase. Arg-259 contributes to the beta-D-fructose 2,6-bisphosphate binding site. His-260 functions as the Tele-phosphohistidine intermediate in the catalytic mechanism. Residues Asn-266 and Gly-272 each coordinate beta-D-fructose 2,6-bisphosphate. Residue Glu-329 is the Proton donor/acceptor of the active site. Tyr-340, Arg-354, Lys-358, Tyr-369, Gln-395, and Arg-399 together coordinate beta-D-fructose 2,6-bisphosphate. 351–354 (FALR) is a binding site for ATP. ATP contacts are provided by residues 395–399 (QAVMR) and Tyr-431. The tract at residues 448–493 (HRDKPTHNFPKSQTPVRMRRNSFTPLSSSNTIRRPRNYSVGSRPLK) is disordered. Over residues 456–479 (FPKSQTPVRMRRNSFTPLSSSNTI) the composition is skewed to polar residues. Ser-469 bears the Phosphoserine mark. A Phosphothreonine modification is found at Thr-471. Thr-478 carries the phosphothreonine; by PKC modification. Ser-486 and Ser-496 each carry phosphoserine. The disordered stretch occupies residues 500–519 (ALDMQEGADQPKTQVSIPVV). Positions 510-519 (PKTQVSIPVV) are enriched in polar residues.

In the C-terminal section; belongs to the phosphoglycerate mutase family. As to quaternary structure, homodimer. Forms a heterodimer with PFKFB3. Post-translationally, phosphorylation by AMPK stimulates activity. Highest levels in kidney; also found in heart, brain, spleen, lung, liver, skeletal muscle and testis.

It catalyses the reaction beta-D-fructose 2,6-bisphosphate + H2O = beta-D-fructose 6-phosphate + phosphate. The catalysed reaction is beta-D-fructose 6-phosphate + ATP = beta-D-fructose 2,6-bisphosphate + ADP + H(+). Phosphorylation results in the activation of the kinase activity. Functionally, synthesis and degradation of fructose 2,6-bisphosphate. This is 6-phosphofructo-2-kinase/fructose-2,6-bisphosphatase 2 (Pfkfb2) from Mus musculus (Mouse).